Here is a 171-residue protein sequence, read N- to C-terminus: Group 1 truncated hemoglobin LI410 (171 aa).

The transit peptide at 1–23 (MMRTVQLRTLRPCIRAQQQPVRA) directs the protein to the chloroplast. 2 residues coordinate heme: tyrosine 63 and histidine 111.

Belongs to the truncated hemoglobin family. Group I subfamily. Heme is required as a cofactor.

Its subcellular location is the plastid. It is found in the chloroplast. The protein is Group 1 truncated hemoglobin LI410 (LI410) of Chlamydomonas moewusii (Chlamydomonas eugametos).